Here is a 118-residue protein sequence, read N- to C-terminus: Large ribosomal subunit protein uL24 (118 aa).

Belongs to the universal ribosomal protein uL24 family. As to quaternary structure, part of the 50S ribosomal subunit.

In terms of biological role, one of two assembly initiator proteins, it binds directly to the 5'-end of the 23S rRNA, where it nucleates assembly of the 50S subunit. Its function is as follows. One of the proteins that surrounds the polypeptide exit tunnel on the outside of the subunit. This is Large ribosomal subunit protein uL24 from Synechococcus sp. (strain WH7803).